We begin with the raw amino-acid sequence, 305 residues long: Undecaprenyl-diphosphatase (305 aa).

Transmembrane regions (helical) follow at residues 18-38 (GVTELFPVSSLGHAVLVPALV), 55-75 (YLAFIVGLHVATAAALLVFFW), 103-123 (WLIVVGTIPVGLAGLALEQLF), 130-150 (PVPAAAFLLLNSVALYAGEVL), 187-207 (GVLIGAAQILALLPGISRSGI), 225-245 (FSFLLATPIILAAGVYKIPEL), 246-266 (FGPLGAGIGGQVLAGSIASFV), and 284-304 (LTPFAIYCAVAGGASLVWLAL).

It belongs to the UppP family.

It localises to the cell membrane. The enzyme catalyses di-trans,octa-cis-undecaprenyl diphosphate + H2O = di-trans,octa-cis-undecaprenyl phosphate + phosphate + H(+). Its function is as follows. Catalyzes the dephosphorylation of undecaprenyl diphosphate (UPP). Confers resistance to bacitracin. This is Undecaprenyl-diphosphatase from Mycobacterium avium (strain 104).